We begin with the raw amino-acid sequence, 159 residues long: ATP synthase subunit b', chloroplastic (159 aa).

The helical transmembrane segment at 30 to 47 (LMALQFLALTIILNLIYY) threads the bilayer.

The protein belongs to the ATPase B chain family. As to quaternary structure, F-type ATPases have 2 components, F(1) - the catalytic core - and F(0) - the membrane proton channel. F(1) has five subunits: alpha(3), beta(3), gamma(1), delta(1), epsilon(1). F(0) has four main subunits: a(1), b(1), b'(1) and c(10-14). The alpha and beta chains form an alternating ring which encloses part of the gamma chain. F(1) is attached to F(0) by a central stalk formed by the gamma and epsilon chains, while a peripheral stalk is formed by the delta, b and b' chains.

Its subcellular location is the plastid. It is found in the chloroplast thylakoid membrane. Functionally, f(1)F(0) ATP synthase produces ATP from ADP in the presence of a proton or sodium gradient. F-type ATPases consist of two structural domains, F(1) containing the extramembraneous catalytic core and F(0) containing the membrane proton channel, linked together by a central stalk and a peripheral stalk. During catalysis, ATP synthesis in the catalytic domain of F(1) is coupled via a rotary mechanism of the central stalk subunits to proton translocation. In terms of biological role, component of the F(0) channel, it forms part of the peripheral stalk, linking F(1) to F(0). The b'-subunit is a diverged and duplicated form of b found in plants and photosynthetic bacteria. This Antithamnion sp. (Red alga) protein is ATP synthase subunit b', chloroplastic.